Consider the following 187-residue polypeptide: UPF0200 protein APE_1753.1 (187 aa).

13-20 provides a ligand contact to ATP; that stretch reads GLPGSGKS.

Belongs to the UPF0200 family.

This Aeropyrum pernix (strain ATCC 700893 / DSM 11879 / JCM 9820 / NBRC 100138 / K1) protein is UPF0200 protein APE_1753.1.